A 225-amino-acid polypeptide reads, in one-letter code: Endonuclease V (225 aa).

Mg(2+) contacts are provided by Asp-43 and Asp-110. 2 interaction with target DNA regions span residues 139-141 (KSR) and 214-221 (HIYTQRLK).

It belongs to the endonuclease V family. Mg(2+) serves as cofactor.

It localises to the cytoplasm. The catalysed reaction is Endonucleolytic cleavage at apurinic or apyrimidinic sites to products with a 5'-phosphate.. Its function is as follows. DNA repair enzyme involved in the repair of deaminated bases. Selectively cleaves double-stranded DNA at the second phosphodiester bond 3' to a deoxyinosine leaving behind the intact lesion on the nicked DNA. In vitro, can also cleave single-stranded substrates with inosine, double-stranded DNA with apurinic sites, or DNA sites with uracil or a mismatched base. When present in molar excess, two protein molecules can bind to the same DNA substrate and effect cleavage of both strands (in vitro). The polypeptide is Endonuclease V (Thermotoga maritima (strain ATCC 43589 / DSM 3109 / JCM 10099 / NBRC 100826 / MSB8)).